Reading from the N-terminus, the 208-residue chain is Large ribosomal subunit protein uL4 (208 aa).

The disordered stretch occupies residues 50 to 83; sequence VKTRAEVSGGGRKPWKQKGTGRARQGSIRAPQWK.

It belongs to the universal ribosomal protein uL4 family. Part of the 50S ribosomal subunit.

Functionally, one of the primary rRNA binding proteins, this protein initially binds near the 5'-end of the 23S rRNA. It is important during the early stages of 50S assembly. It makes multiple contacts with different domains of the 23S rRNA in the assembled 50S subunit and ribosome. In terms of biological role, forms part of the polypeptide exit tunnel. The protein is Large ribosomal subunit protein uL4 of Mycoplasma capricolum subsp. capricolum (strain California kid / ATCC 27343 / NCTC 10154).